We begin with the raw amino-acid sequence, 304 residues long: ATP phosphoribosyltransferase (304 aa).

This sequence belongs to the ATP phosphoribosyltransferase family. Long subfamily. The cofactor is Mg(2+).

Its subcellular location is the cytoplasm. The enzyme catalyses 1-(5-phospho-beta-D-ribosyl)-ATP + diphosphate = 5-phospho-alpha-D-ribose 1-diphosphate + ATP. It functions in the pathway amino-acid biosynthesis; L-histidine biosynthesis; L-histidine from 5-phospho-alpha-D-ribose 1-diphosphate: step 1/9. With respect to regulation, feedback inhibited by histidine. In terms of biological role, catalyzes the condensation of ATP and 5-phosphoribose 1-diphosphate to form N'-(5'-phosphoribosyl)-ATP (PR-ATP). Has a crucial role in the pathway because the rate of histidine biosynthesis seems to be controlled primarily by regulation of HisG enzymatic activity. The polypeptide is ATP phosphoribosyltransferase (Xanthomonas campestris pv. campestris (strain B100)).